The sequence spans 62 residues: Large ribosomal subunit protein eL24 (62 aa).

Residues C7, C10, C33, and C37 each coordinate Zn(2+). Residues 7 to 37 form a C4-type zinc finger; it reads CDYCGDDIEPGTGTMFVHNDGSTVHFCSAKC.

This sequence belongs to the eukaryotic ribosomal protein eL24 family. Part of the 50S ribosomal subunit. Forms a cluster with proteins L3 and L14. Zn(2+) is required as a cofactor.

Functionally, binds to the 23S rRNA. This chain is Large ribosomal subunit protein eL24, found in Halobacterium salinarum (strain ATCC 29341 / DSM 671 / R1).